Consider the following 432-residue polypeptide: Myb family transcription factor EFM (432 aa).

A coiled-coil region spans residues 36–81 (LEDLLSRLEQERLKIDAFKRELPLCMQLLNNAVEVYKQQLEAYRAN). 2 stretches are compositionally biased toward polar residues: residues 123–139 (SQSE…TDQS) and 187–197 (SPTNEHTNGQD). The segment at 123–237 (SQSETKPKNI…SQSNRKARRC (115 aa)) is disordered. The span at 201 to 231 (ESMINNDNNYNNNNNNNSNSNGVSSTTSQSN) shows a compositional bias: low complexity. In terms of domain architecture, HTH myb-type spans 230–290 (SNRKARRCWS…HLQKYRLHTR (61 aa)). Positions 261–286 (PKQIRELMKVDGLTNDEVKSHLQKYR) form a DNA-binding region, H-T-H motif. Positions 354-412 (FYTTPPPPQPLHHHHFQTFNGSSGGTASTDSTHHQVTDSPTVEGKSPESGGGERKGLAA) are disordered.

In terms of assembly, interacts with JMJ30, but not with SVP, FLC or CO. Specifically expressed in vascular tissues of cotyledons, rosette leaves and cauline leaves. Not detected in the vegetative shoot apical meristem.

The protein resides in the nucleus. Its function is as follows. Transcription factor acting as a flowering repressor, directly repressing FT expression in a dosage-dependent manner in the leaf vasculature. The chain is Myb family transcription factor EFM from Arabidopsis thaliana (Mouse-ear cress).